A 34-amino-acid chain; its full sequence is Photosystem II reaction center protein T (34 aa).

A helical membrane pass occupies residues 3-23; the sequence is SVAYILIFTLTIGTLFFAVAF.

The protein belongs to the PsbT family. As to quaternary structure, PSII is composed of 1 copy each of membrane proteins PsbA, PsbB, PsbC, PsbD, PsbE, PsbF, PsbH, PsbI, PsbJ, PsbK, PsbL, PsbM, PsbT, PsbX, PsbY, PsbZ, Psb30/Ycf12, peripheral proteins PsbO, CyanoQ (PsbQ), PsbU, PsbV and a large number of cofactors. It forms dimeric complexes.

The protein resides in the cellular thylakoid membrane. Its function is as follows. Found at the monomer-monomer interface of the photosystem II (PS II) dimer, plays a role in assembly and dimerization of PSII. PSII is a light-driven water plastoquinone oxidoreductase, using light energy to abstract electrons from H(2)O, generating a proton gradient subsequently used for ATP formation. In Mastigocladus laminosus (Fischerella sp.), this protein is Photosystem II reaction center protein T.